We begin with the raw amino-acid sequence, 94 residues long: NADH-ubiquinone oxidoreductase 10.5 kDa subunit (94 aa).

It belongs to the complex I NDUFA2 subunit family. In terms of assembly, complex I is composed of about 40 different subunits.

Its subcellular location is the mitochondrion inner membrane. Functionally, accessory subunit of the mitochondrial membrane respiratory chain NADH dehydrogenase (Complex I), that is believed not to be involved in catalysis. Complex I functions in the transfer of electrons from NADH to the respiratory chain. The immediate electron acceptor for the enzyme is believed to be ubiquinone. The chain is NADH-ubiquinone oxidoreductase 10.5 kDa subunit (nuo-10.5) from Neurospora crassa (strain ATCC 24698 / 74-OR23-1A / CBS 708.71 / DSM 1257 / FGSC 987).